A 309-amino-acid chain; its full sequence is Homoserine O-acetyltransferase (309 aa).

Catalysis depends on cysteine 142, which acts as the Acyl-thioester intermediate. Residues lysine 163 and serine 192 each coordinate substrate. Catalysis depends on histidine 235, which acts as the Proton acceptor. Residue glutamate 237 is part of the active site. Position 249 (arginine 249) interacts with substrate.

The protein belongs to the MetA family.

The protein resides in the cytoplasm. The catalysed reaction is L-homoserine + acetyl-CoA = O-acetyl-L-homoserine + CoA. It participates in amino-acid biosynthesis; L-methionine biosynthesis via de novo pathway; O-acetyl-L-homoserine from L-homoserine: step 1/1. Its function is as follows. Transfers an acetyl group from acetyl-CoA to L-homoserine, forming acetyl-L-homoserine. The sequence is that of Homoserine O-acetyltransferase from Methanomethylophilus alvi (strain Mx1201).